The sequence spans 869 residues: Rho GTPase-activating protein 27 (869 aa).

The SH3 domain maps to 6–69 (EGDVYVLVEH…PAQYVRELPA (64 aa)). A disordered region spans residues 104-137 (GADGSSAEPRGRASSLCGPARQRTSGQRNSLAPG). 3 positions are modified to phosphoserine: Ser-155, Ser-215, and Ser-249. WW domains lie at 246 to 280 (PRLS…SPFE) and 299 to 333 (ESLE…DETE). 3 disordered regions span residues 275-299 (WESP…GSGE), 331-389 (ETEE…DLGP), and 447-474 (VPVP…PEEK). A compositionally biased stretch (acidic residues) spans 331-343 (ETEELEDDPEEQL). Residues 345-356 (MQPSLSPRSPGQ) show a composition bias toward polar residues. Position 350 is a phosphoserine (Ser-350). Positions 414-447 (QFTQEQWVRLEDQEGKPYFYNPEDSSVQWELPQV) constitute a WW 3 domain. A phosphoserine mark is found at Ser-459 and Ser-462. Thr-464 is subject to Phosphothreonine. Ser-469 bears the Phosphoserine mark. Positions 477 to 593 (TLDKAGVLHR…WHKAIAEGIE (117 aa)) constitute a PH domain. A disordered region spans residues 598 to 644 (DLPQREEGEPSSADFGSSERLGSWKEEDVRPNAASPSLNPGSQESDL). The segment covering 631-642 (ASPSLNPGSQES) has biased composition (polar residues). Ser-632 bears the Phosphoserine mark. One can recognise a Rho-GAP domain in the interval 677-866 (CALAQLCERE…LILHQCADIF (190 aa)).

In terms of assembly, interacts with SH3KBP1/CIN85.

The protein localises to the cytoplasm. It localises to the membrane. Functionally, rho GTPase-activating protein which may be involved in clathrin-mediated endocytosis. GTPase activators for the Rho-type GTPases act by converting them to an inactive GDP-bound state. Has activity toward CDC42 and RAC1. In Rattus norvegicus (Rat), this protein is Rho GTPase-activating protein 27 (Arhgap27).